Here is a 274-residue protein sequence, read N- to C-terminus: Octanoyl-[GcvH]:protein N-octanoyltransferase (274 aa).

Residues Q37–S242 enclose the BPL/LPL catalytic domain. Residue C141 is the Acyl-thioester intermediate of the active site.

The protein belongs to the octanoyltransferase LipL family.

It carries out the reaction N(6)-octanoyl-L-lysyl-[glycine-cleavage complex H protein] + L-lysyl-[lipoyl-carrier protein] = N(6)-octanoyl-L-lysyl-[lipoyl-carrier protein] + L-lysyl-[glycine-cleavage complex H protein]. Its pathway is protein modification; protein lipoylation via endogenous pathway; protein N(6)-(lipoyl)lysine from octanoyl-[acyl-carrier-protein]. Its function is as follows. Catalyzes the amidotransfer (transamidation) of the octanoyl moiety from octanoyl-GcvH to the lipoyl domain of the E2 subunit of lipoate-dependent enzymes. The protein is Octanoyl-[GcvH]:protein N-octanoyltransferase of Macrococcus caseolyticus (strain JCSC5402) (Macrococcoides caseolyticum).